The following is a 64-amino-acid chain: Large ribosomal subunit protein bL35 (64 aa).

A disordered region spans residues 1–23 (MPKMKTHRGAAKRFKKTKNKIKR).

The protein belongs to the bacterial ribosomal protein bL35 family.

This chain is Large ribosomal subunit protein bL35, found in Nitratiruptor sp. (strain SB155-2).